Reading from the N-terminus, the 170-residue chain is Peptide deformylase (170 aa).

C91 and H133 together coordinate Fe cation. The active site involves E134. Residue H137 coordinates Fe cation.

This sequence belongs to the polypeptide deformylase family. It depends on Fe(2+) as a cofactor.

The enzyme catalyses N-terminal N-formyl-L-methionyl-[peptide] + H2O = N-terminal L-methionyl-[peptide] + formate. In terms of biological role, removes the formyl group from the N-terminal Met of newly synthesized proteins. Requires at least a dipeptide for an efficient rate of reaction. N-terminal L-methionine is a prerequisite for activity but the enzyme has broad specificity at other positions. This chain is Peptide deformylase, found in Histophilus somni (strain 2336) (Haemophilus somnus).